A 312-amino-acid polypeptide reads, in one-letter code: Malate dehydrogenase (312 aa).

Residues 7–13 (GAAGGIG) and Asp-34 contribute to the NAD(+) site. Substrate is bound by residues Arg-81 and Arg-87. NAD(+) is bound by residues Asn-94 and 117-119 (ITN). Substrate-binding residues include Asn-119 and Arg-153. The active-site Proton acceptor is His-177. Residue Met-227 coordinates NAD(+).

This sequence belongs to the LDH/MDH superfamily. MDH type 1 family. In terms of assembly, homodimer.

It carries out the reaction (S)-malate + NAD(+) = oxaloacetate + NADH + H(+). Functionally, catalyzes the reversible oxidation of malate to oxaloacetate. In Shigella flexneri serotype 5b (strain 8401), this protein is Malate dehydrogenase.